Consider the following 223-residue polypeptide: Ribonuclease HII (223 aa).

One can recognise an RNase H type-2 domain in the interval 32–223 (FHIAGVDEVG…LKGRFRDNMS (192 aa)). A divalent metal cation contacts are provided by Asp38, Glu39, and Asp130.

This sequence belongs to the RNase HII family. Mn(2+) is required as a cofactor. Requires Mg(2+) as cofactor.

It localises to the cytoplasm. The enzyme catalyses Endonucleolytic cleavage to 5'-phosphomonoester.. Its function is as follows. Endonuclease that specifically degrades the RNA of RNA-DNA hybrids. This chain is Ribonuclease HII, found in Bartonella quintana (strain Toulouse) (Rochalimaea quintana).